Consider the following 195-residue polypeptide: Imidazoleglycerol-phosphate dehydratase (195 aa).

Belongs to the imidazoleglycerol-phosphate dehydratase family.

The protein localises to the cytoplasm. It catalyses the reaction D-erythro-1-(imidazol-4-yl)glycerol 3-phosphate = 3-(imidazol-4-yl)-2-oxopropyl phosphate + H2O. Its pathway is amino-acid biosynthesis; L-histidine biosynthesis; L-histidine from 5-phospho-alpha-D-ribose 1-diphosphate: step 6/9. This chain is Imidazoleglycerol-phosphate dehydratase, found in Aromatoleum aromaticum (strain DSM 19018 / LMG 30748 / EbN1) (Azoarcus sp. (strain EbN1)).